The chain runs to 97 residues: Type 1 phosphatases regulator YPI2 (97 aa).

The interval methionine 1 to threonine 97 is disordered. The span at glutamate 43–arginine 53 shows a compositional bias: basic and acidic residues. Basic residues predominate over residues arginine 54–leucine 65.

This sequence belongs to the YPI1 family.

The protein resides in the nucleus. Its function is as follows. Regulator of type 1 phosphatases which maintains protein phosphatase activity under strict control. In Vanderwaltozyma polyspora (strain ATCC 22028 / DSM 70294 / BCRC 21397 / CBS 2163 / NBRC 10782 / NRRL Y-8283 / UCD 57-17) (Kluyveromyces polysporus), this protein is Type 1 phosphatases regulator YPI2 (YPI2).